The sequence spans 692 residues: DNA ligase (692 aa).

Residues 35–39 (DLVYD), 88–89 (SL), and glutamate 117 contribute to the NAD(+) site. The N6-AMP-lysine intermediate role is filled by lysine 119. NAD(+) is bound by residues arginine 140, glutamate 176, lysine 301, and lysine 325. Zn(2+) contacts are provided by cysteine 416, cysteine 419, cysteine 434, and cysteine 439. Residues 611–692 (LTNQSNSWAS…FDLIKNSKKT (82 aa)) form the BRCT domain.

Belongs to the NAD-dependent DNA ligase family. LigA subfamily. Mg(2+) serves as cofactor. The cofactor is Mn(2+).

It catalyses the reaction NAD(+) + (deoxyribonucleotide)n-3'-hydroxyl + 5'-phospho-(deoxyribonucleotide)m = (deoxyribonucleotide)n+m + AMP + beta-nicotinamide D-nucleotide.. Functionally, DNA ligase that catalyzes the formation of phosphodiester linkages between 5'-phosphoryl and 3'-hydroxyl groups in double-stranded DNA using NAD as a coenzyme and as the energy source for the reaction. It is essential for DNA replication and repair of damaged DNA. The chain is DNA ligase from Mesomycoplasma hyopneumoniae (strain J / ATCC 25934 / NCTC 10110) (Mycoplasma hyopneumoniae).